The following is a 180-amino-acid chain: GTP cyclohydrolase 1 (180 aa).

Zn(2+) contacts are provided by Cys71, His74, and Cys142.

The protein belongs to the GTP cyclohydrolase I family. Homomer.

It carries out the reaction GTP + H2O = 7,8-dihydroneopterin 3'-triphosphate + formate + H(+). It functions in the pathway cofactor biosynthesis; 7,8-dihydroneopterin triphosphate biosynthesis; 7,8-dihydroneopterin triphosphate from GTP: step 1/1. The polypeptide is GTP cyclohydrolase 1 (Helicobacter pylori (strain Shi470)).